The primary structure comprises 86 residues: Large ribosomal subunit protein bL27 (86 aa).

Residues 1–21 (MAHHKGGGSSRNGKDSNPQYL) form a disordered region.

This sequence belongs to the bacterial ribosomal protein bL27 family.

This is Large ribosomal subunit protein bL27 from Coprothermobacter proteolyticus (strain ATCC 35245 / DSM 5265 / OCM 4 / BT).